A 138-amino-acid polypeptide reads, in one-letter code: Ribosome-binding factor A (138 aa).

The tract at residues 119 to 138 (DMDEKKNSDEKRDSDEKLED) is disordered.

This sequence belongs to the RbfA family. As to quaternary structure, monomer. Binds 30S ribosomal subunits, but not 50S ribosomal subunits or 70S ribosomes.

Its subcellular location is the cytoplasm. Its function is as follows. One of several proteins that assist in the late maturation steps of the functional core of the 30S ribosomal subunit. Associates with free 30S ribosomal subunits (but not with 30S subunits that are part of 70S ribosomes or polysomes). Required for efficient processing of 16S rRNA. May interact with the 5'-terminal helix region of 16S rRNA. The protein is Ribosome-binding factor A of Alkaliphilus metalliredigens (strain QYMF).